A 268-amino-acid chain; its full sequence is Hydroxyethylthiazole kinase 2 (268 aa).

Met-42 provides a ligand contact to substrate. The ATP site is built by Lys-117 and Thr-167. Gly-194 contacts substrate.

The protein belongs to the Thz kinase family. It depends on Mg(2+) as a cofactor.

It catalyses the reaction 5-(2-hydroxyethyl)-4-methylthiazole + ATP = 4-methyl-5-(2-phosphooxyethyl)-thiazole + ADP + H(+). It functions in the pathway cofactor biosynthesis; thiamine diphosphate biosynthesis; 4-methyl-5-(2-phosphoethyl)-thiazole from 5-(2-hydroxyethyl)-4-methylthiazole: step 1/1. In terms of biological role, catalyzes the phosphorylation of the hydroxyl group of 4-methyl-5-beta-hydroxyethylthiazole (THZ). This chain is Hydroxyethylthiazole kinase 2, found in Streptococcus pneumoniae (strain CGSP14).